We begin with the raw amino-acid sequence, 151 residues long: D-aminoacyl-tRNA deacylase (151 aa).

The short motif at 139–140 (GP) is the Gly-cisPro motif, important for rejection of L-amino acids element.

It belongs to the DTD family. In terms of assembly, homodimer.

Its subcellular location is the cytoplasm. The catalysed reaction is glycyl-tRNA(Ala) + H2O = tRNA(Ala) + glycine + H(+). It carries out the reaction a D-aminoacyl-tRNA + H2O = a tRNA + a D-alpha-amino acid + H(+). Functionally, an aminoacyl-tRNA editing enzyme that deacylates mischarged D-aminoacyl-tRNAs. Also deacylates mischarged glycyl-tRNA(Ala), protecting cells against glycine mischarging by AlaRS. Acts via tRNA-based rather than protein-based catalysis; rejects L-amino acids rather than detecting D-amino acids in the active site. By recycling D-aminoacyl-tRNA to D-amino acids and free tRNA molecules, this enzyme counteracts the toxicity associated with the formation of D-aminoacyl-tRNA entities in vivo and helps enforce protein L-homochirality. The sequence is that of D-aminoacyl-tRNA deacylase from Symbiobacterium thermophilum (strain DSM 24528 / JCM 14929 / IAM 14863 / T).